A 422-amino-acid chain; its full sequence is Enolase (422 aa).

Gln-161 contacts (2R)-2-phosphoglycerate. Glu-203 (proton donor) is an active-site residue. Residues Asp-240, Glu-283, and Asp-310 each coordinate Mg(2+). 4 residues coordinate (2R)-2-phosphoglycerate: Lys-335, Arg-364, Ser-365, and Lys-386. Lys-335 serves as the catalytic Proton acceptor.

Belongs to the enolase family. It depends on Mg(2+) as a cofactor.

It localises to the cytoplasm. Its subcellular location is the secreted. The protein localises to the cell surface. The catalysed reaction is (2R)-2-phosphoglycerate = phosphoenolpyruvate + H2O. It participates in carbohydrate degradation; glycolysis; pyruvate from D-glyceraldehyde 3-phosphate: step 4/5. Functionally, catalyzes the reversible conversion of 2-phosphoglycerate (2-PG) into phosphoenolpyruvate (PEP). It is essential for the degradation of carbohydrates via glycolysis. This is Enolase from Deinococcus geothermalis (strain DSM 11300 / CIP 105573 / AG-3a).